The sequence spans 453 residues: Midnolin (453 aa).

Residues 20-94 (MNLNIQSTTG…LTLLPSVEAG (75 aa)) enclose the Ubiquitin-like domain. Disordered stretches follow at residues 185–219 (HLAS…TTSV), 231–256 (PCAE…RSRK), 330–374 (SQAR…QTEN), and 390–434 (QKRL…IDFE). Composition is skewed to low complexity over residues 188–204 (SCTP…PTAS) and 239–252 (SSRG…SASS). The span at 330–362 (SQARNPKATSPQSSEPQQTTHPVGHCQAQTRTC) shows a compositional bias: polar residues. Residues 365–374 (SGDRLRQTEN) are compositionally biased toward basic and acidic residues. Positions 390–399 (QKRLRRKARR) are enriched in basic residues. Positions 415 to 428 (RTSSNSSTSSGEGS) are enriched in low complexity.

It localises to the nucleus. The protein localises to the cytoplasm. It is found in the cytosol. The protein resides in the nucleolus. Functionally, facilitates ubiquitin-independent proteasomal degradation of polycomb protein CBX4. Plays a role in inhibiting the activity of glucokinase GCK and both glucose-induced and basal insulin secretion. This chain is Midnolin (midn), found in Xenopus tropicalis (Western clawed frog).